A 346-amino-acid chain; its full sequence is Enkurin domain-containing protein 1 (346 aa).

Disordered regions lie at residues 1-24, 88-107, and 113-132; these read MCEG…DYYR, SGVS…NLRR, and RRFQ…PLKA. Phosphoserine is present on Ser-91. Basic and acidic residues-rich tracts occupy residues 98–107 and 113–125; these read KDHEKENLRR and RRFQ…REQG. Ser-136 carries the phosphoserine modification. The 93-residue stretch at 251 to 343 folds into the Enkurin domain; it reads ERRDLWRKEA…IFSRPKVFVK (93 aa). Positions 259 to 280 are disordered; the sequence is EAEARQRSQPDPSMPPGHTLMP.

In terms of assembly, interacts with alpha-tubulin. Interacts (via central region) with CCP110 (via N-terminal region); competes with CEP97 for binding to CCP110. Widely expressed with highest levels in testis and lung.

The protein localises to the cytoplasm. Its subcellular location is the cytoskeleton. It is found in the microtubule organizing center. The protein resides in the centrosome. It localises to the centriole. The protein localises to the cilium basal body. Its subcellular location is the cell projection. It is found in the cilium. The protein resides in the spindle. It localises to the spindle pole. The protein localises to the cilium axoneme. In terms of biological role, microtubule-binding protein which regulates microtubule organization and stability. Promotes the stability of astral microtubules and facilitates the proper orientation of the mitotic spindle. This allows the oriented division of basal keratinocytes and contributes to epidermal stratification. Required for the assembly of both primary and motile cilia. Destabilizes the interaction between CCP110 and CEP97 by competing with CEP97 for binding to CCP110 which promotes the removal of CCP110 and CEP97 from the mother centriole and allows the initiation of ciliogenesis. The sequence is that of Enkurin domain-containing protein 1 (Enkd1) from Mus musculus (Mouse).